Here is a 242-residue protein sequence, read N- to C-terminus: Tryptophan synthase alpha chain (242 aa).

Active-site proton acceptor residues include Glu31 and Asp42.

Belongs to the TrpA family. As to quaternary structure, tetramer of two alpha and two beta chains.

The catalysed reaction is (1S,2R)-1-C-(indol-3-yl)glycerol 3-phosphate + L-serine = D-glyceraldehyde 3-phosphate + L-tryptophan + H2O. It participates in amino-acid biosynthesis; L-tryptophan biosynthesis; L-tryptophan from chorismate: step 5/5. Functionally, the alpha subunit is responsible for the aldol cleavage of indoleglycerol phosphate to indole and glyceraldehyde 3-phosphate. This is Tryptophan synthase alpha chain from Staphylococcus aureus (strain Mu3 / ATCC 700698).